The sequence spans 289 residues: Undecaprenyl-diphosphatase (289 aa).

A run of 8 helical transmembrane segments spans residues 23 to 43 (LFLG…TAHL), 56 to 76 (GVAV…AYFW), 104 to 124 (SAIV…KLFW), 135 to 155 (IPAI…AENV), 165 to 185 (LSFW…IPGV), 210 to 230 (FLLG…QAFG), 235 to 255 (VDVF…WIAI), and 269 to 289 (IFIT…YLAF).

This sequence belongs to the UppP family.

The protein localises to the cell inner membrane. The enzyme catalyses di-trans,octa-cis-undecaprenyl diphosphate + H2O = di-trans,octa-cis-undecaprenyl phosphate + phosphate + H(+). Catalyzes the dephosphorylation of undecaprenyl diphosphate (UPP). Confers resistance to bacitracin. This Prochlorococcus marinus (strain SARG / CCMP1375 / SS120) protein is Undecaprenyl-diphosphatase.